The chain runs to 380 residues: Protein-tyrosine sulfotransferase A (380 aa).

Residues 1–6 lie on the Cytoplasmic side of the membrane; that stretch reads MRKNRE. Residues 7–27 traverse the membrane as a helical; Signal-anchor for type II membrane protein segment; that stretch reads LLLVLFLVVFILFYFITARTA. At 28 to 380 the chain is on the lumenal side; sequence DDPYYSNHRE…PIVDNEVSKL (353 aa). Asn66 is a glycosylation site (N-linked (GlcNAc...) asparagine). Position 79–83 (79–83) interacts with 3'-phosphoadenylyl sulfate; sequence RSGTT. Cysteines 97 and 157 form a disulfide. Glu100 acts as the Proton donor/acceptor in catalysis. Residues 102 to 106 form an interaction with peptide substrate region; that stretch reads RVIPR. The 3'-phosphoadenylyl sulfate site is built by Arg184, Ser192, and Arg196. A disulfide bond links Cys226 and Cys234. Residues Tyr239, 284-293, and Lys299 each bind 3'-phosphoadenylyl sulfate; that span reads SSDQVVKPVN.

It belongs to the protein sulfotransferase family.

It is found in the golgi apparatus membrane. It catalyses the reaction L-tyrosyl-[protein] + 3'-phosphoadenylyl sulfate = O-sulfo-L-tyrosine-[protein] + adenosine 3',5'-bisphosphate + H(+). Functionally, catalyzes the O-sulfation of tyrosine residues within acidic motifs of polypeptides, using 3'-phosphoadenylyl sulfate (PAPS) as cosubstrate. The sequence is that of Protein-tyrosine sulfotransferase A (tpst-1) from Caenorhabditis elegans.